Consider the following 805-residue polypeptide: Ribosome biogenesis protein ERB1 (805 aa).

A disordered region spans residues 1 to 105; the sequence is MVKGRKSQKA…SDFSEDDTKS (105 aa). The segment covering 8–22 has biased composition (basic and acidic residues); it reads QKADKVTKAKKRVAD. Residues 23 to 75 show a composition bias toward acidic residues; the sequence is EVDESESEPELQVEGLIDAEAESEDDESFESAEENASAEEDEEDEEDEEDSDA. Residues 264 to 382 form a required for interaction with NOP7 region; it reads RFVPSKNEAK…LRKVPGYTES (119 aa). The segment at 382–418 is required for interaction with YTM1; sequence SVRERFERSLDLYLAPRMRKNKLNIDPESLIPELPSP. WD repeat units lie at residues 434-473, 482-522, 590-632, 635-673, 676-715, 719-758, and 775-805; these read GHEGKIRTLSIDPTGIWLATGSDDGSVRIWEILTGREVYR, NPED…YDIE, VCKK…TQSP, KSKGIIMDAKFHPFKPQLFVCSQRYVRIYDLSQQVLVKK, PGARWLSNIDIHPRGDNLIASSYDKRVLWHDLDLAATPYK, YHDKAVRSTTFHKKLPLFCSAADDGFIHIFHATVYDDMMK, and GHLGVLDTIWHPKEAWLFSAGADNTARMWTT.

Belongs to the WD repeat BOP1/ERB1 family. As to quaternary structure, component of the NOP7 complex, composed of ERB1, NOP7 and YTM1. The complex is held together by ERB1, which interacts with NOP7 via its N-terminal domain and with YTM1 via a high-affinity interaction between the seven-bladed beta-propeller domains of the 2 proteins. The NOP7 complex associates with the 66S pre-ribosome.

It is found in the nucleus. Its subcellular location is the nucleolus. The protein resides in the nucleoplasm. In terms of biological role, component of the NOP7 complex, which is required for maturation of the 25S and 5.8S ribosomal RNAs and formation of the 60S ribosome. This is Ribosome biogenesis protein ERB1 from Candida glabrata (strain ATCC 2001 / BCRC 20586 / JCM 3761 / NBRC 0622 / NRRL Y-65 / CBS 138) (Yeast).